We begin with the raw amino-acid sequence, 162 residues long: Phosphopantetheine adenylyltransferase (162 aa).

Position 9 (serine 9) interacts with substrate. ATP contacts are provided by residues 9–10 and histidine 17; that span reads SF. Lysine 41, leucine 73, and lysine 87 together coordinate substrate. ATP is bound by residues 88–90, glutamate 98, and 123–129; these read GLR and YAHLSSS.

The protein belongs to the bacterial CoaD family. In terms of assembly, homohexamer. Mg(2+) is required as a cofactor.

It localises to the cytoplasm. The catalysed reaction is (R)-4'-phosphopantetheine + ATP + H(+) = 3'-dephospho-CoA + diphosphate. It functions in the pathway cofactor biosynthesis; coenzyme A biosynthesis; CoA from (R)-pantothenate: step 4/5. In terms of biological role, reversibly transfers an adenylyl group from ATP to 4'-phosphopantetheine, yielding dephospho-CoA (dPCoA) and pyrophosphate. The protein is Phosphopantetheine adenylyltransferase of Symbiobacterium thermophilum (strain DSM 24528 / JCM 14929 / IAM 14863 / T).